A 144-amino-acid chain; its full sequence is Large ribosomal subunit protein uL15 (144 aa).

Residues 1–58 are disordered; it reads MRLNTLAPAAGSKHAPKRVGRGIGSGLGKTGGRGHKGQKSRSGGKVRPGFEGGQMPLK. Over residues 21–31 the composition is skewed to gly residues; sequence RGIGSGLGKTG. Over residues 32 to 44 the composition is skewed to basic residues; it reads GRGHKGQKSRSGG.

This sequence belongs to the universal ribosomal protein uL15 family. In terms of assembly, part of the 50S ribosomal subunit.

Binds to the 23S rRNA. The sequence is that of Large ribosomal subunit protein uL15 from Vibrio parahaemolyticus serotype O3:K6 (strain RIMD 2210633).